We begin with the raw amino-acid sequence, 260 residues long: Neuraminyllactose-binding hemagglutinin (260 aa).

Residues Met-1–Gly-27 form the signal peptide. Cys-28 carries the N-palmitoyl cysteine lipid modification. Cys-28 carries the S-diacylglycerol cysteine lipid modification.

Its subcellular location is the cell outer membrane. This chain is Neuraminyllactose-binding hemagglutinin (hpaA), found in Helicobacter pylori (strain ATCC 700392 / 26695) (Campylobacter pylori).